The primary structure comprises 329 residues: Fructose-1,6-bisphosphatase class 1 2 (329 aa).

Mg(2+) is bound by residues Glu92, Asp111, Leu113, and Asp114. Substrate is bound by residues 114 to 117 (DGSS) and Asn206. Glu278 contributes to the Mg(2+) binding site.

Belongs to the FBPase class 1 family. As to quaternary structure, homotetramer. The cofactor is Mg(2+).

Its subcellular location is the cytoplasm. It carries out the reaction beta-D-fructose 1,6-bisphosphate + H2O = beta-D-fructose 6-phosphate + phosphate. The protein operates within carbohydrate biosynthesis; gluconeogenesis. The polypeptide is Fructose-1,6-bisphosphatase class 1 2 (Xanthobacter autotrophicus (strain ATCC BAA-1158 / Py2)).